Reading from the N-terminus, the 243-residue chain is Triosephosphate isomerase (243 aa).

Residue asparagine 9–lysine 11 participates in substrate binding. Histidine 96 functions as the Electrophile in the catalytic mechanism. Glutamate 165 acts as the Proton acceptor in catalysis. Residues glycine 171, serine 204, and glycine 225–glycine 226 each bind substrate.

It belongs to the triosephosphate isomerase family. Homodimer.

It localises to the cytoplasm. It carries out the reaction D-glyceraldehyde 3-phosphate = dihydroxyacetone phosphate. It functions in the pathway carbohydrate biosynthesis; gluconeogenesis. It participates in carbohydrate degradation; glycolysis; D-glyceraldehyde 3-phosphate from glycerone phosphate: step 1/1. Functionally, involved in the gluconeogenesis. Catalyzes stereospecifically the conversion of dihydroxyacetone phosphate (DHAP) to D-glyceraldehyde-3-phosphate (G3P). This chain is Triosephosphate isomerase, found in Synechococcus sp. (strain CC9902).